The following is a 109-amino-acid chain: MVWKRTISAKALEKAKSAAVKVDDKVIFIANVNGNLYAMDAVCSHARCILGKLDEEKLTVRCYCHLALFDLRTGQMLEPPYVAPDAPKEKLGLKTYQIRDNNGWIEVDV.

Positions 3-107 (WKRTISAKAL…IRDNNGWIEV (105 aa)) constitute a Rieske domain. The [2Fe-2S] cluster site is built by Cys43, His45, Cys62, and His65.

As to quaternary structure, homooligomeric. [2Fe-2S] cluster is required as a cofactor.

The protein resides in the cytoplasm. In terms of biological role, not yet known. This Sulfurisphaera tokodaii (strain DSM 16993 / JCM 10545 / NBRC 100140 / 7) (Sulfolobus tokodaii) protein is Sulredoxin (sdx).